Consider the following 448-residue polypeptide: Probable metal transport system membrane protein CPn_0347/CP_0413/CPj0347/CpB0354 (448 aa).

8 helical membrane passes run 15-35 (FLAV…LLIS), 47-67 (ASYP…SLQA), 69-89 (IFWI…IIVF), 100-120 (SALC…ASYV), 144-164 (FLEA…LWWW), 193-213 (LIFI…VLIS), 233-253 (ILIL…YISV), and 270-290 (LPTG…CLLF).

This sequence belongs to the ABC-3 integral membrane protein family.

Its subcellular location is the cell inner membrane. Functionally, part of an ATP-driven transport system CPn_0346/CPn_0347/CPn_0348/CPn_0349 for a metal. This Chlamydia pneumoniae (Chlamydophila pneumoniae) protein is Probable metal transport system membrane protein CPn_0347/CP_0413/CPj0347/CpB0354.